Here is a 920-residue protein sequence, read N- to C-terminus: Dynamin-B (920 aa).

The disordered stretch occupies residues Asn65–Asn84. The 295-residue stretch at Glu154–Pro448 folds into the Dynamin-type G domain. Positions Gly164–Ser171 are G1 motif. Position 164–172 (Gly164–Ser172) interacts with GTP. The interval Val190–Arg192 is G2 motif. Positions Thr204–Thr241 are disordered. A compositionally biased stretch (acidic residues) spans Glu212–Gly236. Positions Asp290–Gly293 are G3 motif. The interval Thr359–Asp362 is G4 motif. GTP contacts are provided by residues Thr359–Asp365 and Asn390–Gln393. The G5 motif stretch occupies residues Val389–Ser392. The segment at Phe680–Gln790 is disordered. Composition is skewed to low complexity over residues Gln681 to Pro705 and Gln724 to Gln751. A coiled-coil region spans residues Gln724–Gln751. Over residues Pro765–Pro774 the composition is skewed to pro residues. Positions Lys775–Gln790 are enriched in low complexity. A GED domain is found at Ile825 to Leu916.

It belongs to the TRAFAC class dynamin-like GTPase superfamily. Dynamin/Fzo/YdjA family.

The protein resides in the cytoplasm. Enzyme hydrolyzing GTP. This is Dynamin-B (dymB) from Dictyostelium discoideum (Social amoeba).